The chain runs to 200 residues: Protein Syd (200 aa).

The protein belongs to the Syd family.

The protein resides in the cell inner membrane. Interacts with the SecY protein in vivo. May bind preferentially to an uncomplexed state of SecY, thus functioning either as a chelating agent for excess SecY in the cell or as a regulatory factor that negatively controls the translocase function. This is Protein Syd from Colwellia psychrerythraea (strain 34H / ATCC BAA-681) (Vibrio psychroerythus).